Here is a 992-residue protein sequence, read N- to C-terminus: Aminopeptidase Q (992 aa).

Residues 2–13 (GPPSSSGFYVSR) are Cytoplasmic-facing. The helical; Signal-anchor for type II membrane protein transmembrane segment at 14–34 (AVALLLAALAAALLLALAVLA) threads the bilayer. Residues 35 to 992 (ALYGRCARVQ…RMTAWLRKNT (958 aa)) are Extracellular-facing. Positions 48-92 (LHHGGVPDAASSPRGTQEEQLPTWPPRPTREPAGTATPGHWRPPG) are disordered. Residue Asn133 is glycosylated (N-linked (GlcNAc...) asparagine). Substrate is bound at residue Glu241. N-linked (GlcNAc...) asparagine glycans are attached at residues Asn262, Asn289, Asn347, and Asn361. Residue 380–384 (SAMEN) participates in substrate binding. His416 provides a ligand contact to Zn(2+). Glu417 serves as the catalytic Proton acceptor. Residues His420 and Glu439 each coordinate Zn(2+). An N-linked (GlcNAc...) asparagine glycan is attached at Asn489. Tyr505 acts as the Proton donor in catalysis. 7 N-linked (GlcNAc...) asparagine glycosylation sites follow: Asn584, Asn602, Asn609, Asn655, Asn811, Asn850, and Asn889.

Belongs to the peptidase M1 family. It depends on Zn(2+) as a cofactor. Expressed in skin. Expression levels do not differ between dark and light skin areas.

It is found in the membrane. Functionally, metalloprotease which may be important for placentation by regulating biological activity of key peptides at the embryo-maternal interface. Involved in coat pigmentation patterns. During skin development, may be required to establish the periodicity of tabby markings, initiating a pre-pattern at or before hair follicle development. In Acinonyx jubatus (Cheetah), this protein is Aminopeptidase Q (LVRN).